The primary structure comprises 190 residues: RNA pyrophosphohydrolase (190 aa).

Residues 6–149 enclose the Nudix hydrolase domain; the sequence is GYRPNVGIIL…KRDVYTQALN (144 aa). Positions 38–59 match the Nudix box motif; that stretch reads GGIKYGESPVQAMYRELHEEVG. The tract at residues 167–190 is disordered; that stretch reads QRVHGPRSTDSPSSETDGHAHIAG.

The protein belongs to the Nudix hydrolase family. RppH subfamily. Requires a divalent metal cation as cofactor.

Accelerates the degradation of transcripts by removing pyrophosphate from the 5'-end of triphosphorylated RNA, leading to a more labile monophosphorylated state that can stimulate subsequent ribonuclease cleavage. The protein is RNA pyrophosphohydrolase of Bordetella pertussis (strain Tohama I / ATCC BAA-589 / NCTC 13251).